Reading from the N-terminus, the 21-residue chain is TTVYDAEGSKVDFDGSLRIIV.

As to quaternary structure, monomer.

The protein resides in the cell outer membrane. The sequence is that of Major outer membrane protein P44 from Mannheimia haemolytica (Pasteurella haemolytica).